The following is a 189-amino-acid chain: Ras-like protein 1 (189 aa).

A GTP-binding site is contributed by 10 to 17 (GAGGVGKS). The Effector region signature appears at 32–40 (YDPTIEDSY). GTP-binding positions include 57 to 61 (DTAGQ) and 116 to 119 (NKCD). At C186 the chain carries Cysteine methyl ester. C186 is lipidated: S-geranylgeranyl cysteine. The propeptide at 187 to 189 (KML) is removed in mature form.

The protein belongs to the small GTPase superfamily. Ras family.

The protein localises to the cell membrane. It carries out the reaction GTP + H2O = GDP + phosphate + H(+). Alternates between an inactive form bound to GDP and an active form bound to GTP. Activated by a guanine nucleotide-exchange factor (GEF) and inactivated by a GTPase-activating protein (GAP). Ras proteins bind GDP/GTP and possess intrinsic GTPase activity. Plays a role in eye development by regulating cell growth, survival of postmitotic ommatidial cells and differentiation of photoreceptor cells. During larval development, mediates Ptth/tor signaling leading to the production of ecdysone, a hormone required for the initiation of metamorphosis. This chain is Ras-like protein 1, found in Drosophila ananassae (Fruit fly).